Here is a 189-residue protein sequence, read N- to C-terminus: dCTP deaminase (189 aa).

DCTP contacts are provided by residues 112 to 117 (KSTYAR), 136 to 138 (TLE), Gln-157, Tyr-171, and Gln-181. Residue Glu-138 is the Proton donor/acceptor of the active site.

It belongs to the dCTP deaminase family. As to quaternary structure, homotrimer.

It catalyses the reaction dCTP + H2O + H(+) = dUTP + NH4(+). Its pathway is pyrimidine metabolism; dUMP biosynthesis; dUMP from dCTP (dUTP route): step 1/2. Its function is as follows. Catalyzes the deamination of dCTP to dUTP. This Xanthomonas campestris pv. campestris (strain 8004) protein is dCTP deaminase.